The following is a 415-amino-acid chain: Gamma-glutamyl phosphate reductase (415 aa).

Belongs to the gamma-glutamyl phosphate reductase family.

It localises to the cytoplasm. The catalysed reaction is L-glutamate 5-semialdehyde + phosphate + NADP(+) = L-glutamyl 5-phosphate + NADPH + H(+). It functions in the pathway amino-acid biosynthesis; L-proline biosynthesis; L-glutamate 5-semialdehyde from L-glutamate: step 2/2. In terms of biological role, catalyzes the NADPH-dependent reduction of L-glutamate 5-phosphate into L-glutamate 5-semialdehyde and phosphate. The product spontaneously undergoes cyclization to form 1-pyrroline-5-carboxylate. This is Gamma-glutamyl phosphate reductase from Listeria welshimeri serovar 6b (strain ATCC 35897 / DSM 20650 / CCUG 15529 / CIP 8149 / NCTC 11857 / SLCC 5334 / V8).